A 178-amino-acid chain; its full sequence is Caveolin-1 (178 aa).

At Ser-2 the chain carries N-acetylserine. Phosphoserine is present on Ser-2. The required for homooligomerization stretch occupies residues 2–94 (SGGKYVDSEG…WKASFTTFTV (93 aa)). The Cytoplasmic segment spans residues 2-104 (SGGKYVDSEG…TKYWFYRLLS (103 aa)). Position 5 is an N6-acetyllysine; alternate (Lys-5). Residue Lys-5 forms a Glycyl lysine isopeptide (Lys-Gly) (interchain with G-Cter in ubiquitin); alternate linkage. Residue Tyr-6 is modified to Phosphotyrosine. Ser-9 bears the Phosphoserine mark. Tyr-14 is modified (phosphotyrosine; by ABL1). The residue at position 25 (Tyr-25) is a Phosphotyrosine. Residues Lys-26 and Lys-30 each participate in a glycyl lysine isopeptide (Lys-Gly) (interchain with G-Cter in ubiquitin) cross-link. Ser-37 bears the Phosphoserine mark. Residues Lys-39, Lys-47, and Lys-57 each participate in a glycyl lysine isopeptide (Lys-Gly) (interchain with G-Cter in ubiquitin) cross-link. The interval 82-94 (DGIWKASFTTFTV) is interaction with CAVIN3. The helical intramembrane region spans 105–125 (ALFGIPMALIWGIYFAILSFL). The Cytoplasmic portion of the chain corresponds to 126 to 178 (HIWAVVPCIKSFLIEIQCISRVYSIYIHTVCDPLFEAIGKIFSNVRIGLQKEI). The tract at residues 131 to 142 (VPCIKSFLIEIQ) is interacts with SPRY1, SPRY2, SPRY3 and SPRY4. S-palmitoyl cysteine attachment occurs at residues Cys-133, Cys-143, and Cys-156. Positions 149–160 (SIYIHTVCDPLF) are interacts with SPRY1, SPRY2, and SPRY4. Residues 167-178 (FSNVRIGLQKEI) are interacts with SPRY1, SPRY2, SPRY3 and SPRY4.

The protein belongs to the caveolin family. As to quaternary structure, homooligomer. Interacts with GLIPR2. Interacts with NOSTRIN. Interacts with SNAP25 and STX1A. Interacts (via the N-terminus) with DPP4; the interaction is direct. Interacts with CTNNB1, CDH1 and JUP. Interacts with PACSIN2; this interaction induces membrane tubulation. Interacts with SLC7A9. Interacts with BMX and BTK. Interacts with TGFBR1. Interacts with CAVIN3 (via leucine-zipper domain) in a cholesterol-sensitive manner. Interacts with CAVIN1. Interacts with EHD2 in a cholesterol-dependent manner. Forms a ternary complex with UBXN6 and VCP; mediates CAV1 targeting to lysosomes for degradation. Interacts with ABCG1; this interaction regulates ABCG1-mediated cholesterol efflux. Interacts with NEU3; this interaction enhances NEU3 sialidase activity within caveola. Interacts (via C-terminus) with SPRY1, SPRY2 (via C-terminus), SPRY3, and SPRY4. Interacts with IGFBP5; this interaction allows trafficking of IGFBP5 from the plasma membrane to the nucleus. In terms of processing, phosphorylated at Tyr-14 by ABL1 in response to oxidative stress. Ubiquitinated. Undergo monoubiquitination and multi- and/or polyubiquitination. Monoubiquitination of N-terminal lysines promotes integration in a ternary complex with UBXN6 and VCP which promotes oligomeric CAV1 targeting to lysosomes for degradation. Ubiquitinated by ZNRF1; leading to degradation and modulation of the TLR4-mediated immune response.

The protein localises to the golgi apparatus membrane. It is found in the cell membrane. The protein resides in the membrane. It localises to the caveola. Its subcellular location is the membrane raft. Functionally, may act as a scaffolding protein within caveolar membranes. Forms a stable heterooligomeric complex with CAV2 that targets to lipid rafts and drives caveolae formation. Mediates the recruitment of CAVIN proteins (CAVIN1/2/3/4) to the caveolae. Interacts directly with G-protein alpha subunits and can functionally regulate their activity. Involved in the costimulatory signal essential for T-cell receptor (TCR)-mediated T-cell activation. Its binding to DPP4 induces T-cell proliferation and NF-kappa-B activation in a T-cell receptor/CD3-dependent manner. Recruits CTNNB1 to caveolar membranes and may regulate CTNNB1-mediated signaling through the Wnt pathway. Negatively regulates TGFB1-mediated activation of SMAD2/3 by mediating the internalization of TGFBR1 from membrane rafts leading to its subsequent degradation. Binds 20(S)-hydroxycholesterol (20(S)-OHC). The polypeptide is Caveolin-1 (CAV1) (Saimiri boliviensis boliviensis (Bolivian squirrel monkey)).